Here is a 678-residue protein sequence, read N- to C-terminus: Glycine--tRNA ligase beta subunit (678 aa).

The protein belongs to the class-II aminoacyl-tRNA synthetase family. In terms of assembly, tetramer of two alpha and two beta subunits.

Its subcellular location is the cytoplasm. It catalyses the reaction tRNA(Gly) + glycine + ATP = glycyl-tRNA(Gly) + AMP + diphosphate. This Sulfurihydrogenibium sp. (strain YO3AOP1) protein is Glycine--tRNA ligase beta subunit.